Consider the following 308-residue polypeptide: Transaldolase (308 aa).

Residue Lys-125 is the Schiff-base intermediate with substrate of the active site.

The protein belongs to the transaldolase family. Type 1 subfamily. Homodimer.

The protein resides in the cytoplasm. It carries out the reaction D-sedoheptulose 7-phosphate + D-glyceraldehyde 3-phosphate = D-erythrose 4-phosphate + beta-D-fructose 6-phosphate. Its pathway is carbohydrate degradation; pentose phosphate pathway; D-glyceraldehyde 3-phosphate and beta-D-fructose 6-phosphate from D-ribose 5-phosphate and D-xylulose 5-phosphate (non-oxidative stage): step 2/3. Transaldolase is important for the balance of metabolites in the pentose-phosphate pathway. The polypeptide is Transaldolase (Pseudomonas savastanoi pv. phaseolicola (strain 1448A / Race 6) (Pseudomonas syringae pv. phaseolicola (strain 1448A / Race 6))).